Consider the following 52-residue polypeptide: Ribosome modulation factor (52 aa).

This sequence belongs to the ribosome modulation factor family.

It is found in the cytoplasm. Its function is as follows. During stationary phase, converts 70S ribosomes to an inactive dimeric form (100S ribosomes). The polypeptide is Ribosome modulation factor (Xenorhabdus nematophila (strain ATCC 19061 / DSM 3370 / CCUG 14189 / LMG 1036 / NCIMB 9965 / AN6)).